The chain runs to 472 residues: 3-isopropylmalate dehydratase large subunit (472 aa).

Cys347, Cys407, and Cys410 together coordinate [4Fe-4S] cluster.

The protein belongs to the aconitase/IPM isomerase family. LeuC type 1 subfamily. In terms of assembly, heterodimer of LeuC and LeuD. [4Fe-4S] cluster serves as cofactor.

It carries out the reaction (2R,3S)-3-isopropylmalate = (2S)-2-isopropylmalate. Its pathway is amino-acid biosynthesis; L-leucine biosynthesis; L-leucine from 3-methyl-2-oxobutanoate: step 2/4. Its function is as follows. Catalyzes the isomerization between 2-isopropylmalate and 3-isopropylmalate, via the formation of 2-isopropylmaleate. The chain is 3-isopropylmalate dehydratase large subunit from Bacillus subtilis (strain 168).